The sequence spans 160 residues: MSGLPSSFDSKEASVDELPFLEKVKFHCKQQPLVPLGTLLTTGAVALAAQNVRTGNKKKAQVWFRWRVGLQAATLVALVAGSFIYGSSLKEKKSEEEKMREKAKMRELLWIQELERRDQETQYRRKRAELARQKMQENEAAVSRLQKELKDLESHIKNEK.

The region spanning 5-96 (PSSFDSKEAS…SSLKEKKSEE (92 aa)) is the HIG1 domain. Helical transmembrane passes span 33–49 (LVPLGTLLTTGAVALAA) and 67–89 (RVGLQAATLVALVAGSFIYGSSL). A coiled-coil region spans residues 88–160 (SLKEKKSEEE…DLESHIKNEK (73 aa)).

Belongs to the RCF1 family. In terms of assembly, associates with the respiratory chain complex III/complex IV supercomplex.

It is found in the mitochondrion membrane. Cytochrome c oxidase subunit which plays a role in assembly of respiratory supercomplexes. This chain is Respiratory supercomplex factor 1, mitochondrial (RCF1), found in Zygosaccharomyces rouxii (strain ATCC 2623 / CBS 732 / NBRC 1130 / NCYC 568 / NRRL Y-229).